Here is a 174-residue protein sequence, read N- to C-terminus: Shikimate kinase 2 (174 aa).

Residue 12 to 17 (GAGKTT) coordinates ATP. Positions 16 and 32 each coordinate Mg(2+). Substrate contacts are provided by Asp-34, Arg-58, and Gly-79. The segment at 112–126 (AEDPEEAQRPSLTGK) is LID domain. Arg-120 contacts ATP. Arg-139 is a binding site for substrate. Residue Gln-155 participates in ATP binding.

This sequence belongs to the shikimate kinase family. AroL subfamily. Monomer. The cofactor is Mg(2+).

It is found in the cytoplasm. It catalyses the reaction shikimate + ATP = 3-phosphoshikimate + ADP + H(+). It participates in metabolic intermediate biosynthesis; chorismate biosynthesis; chorismate from D-erythrose 4-phosphate and phosphoenolpyruvate: step 5/7. Catalyzes the specific phosphorylation of the 3-hydroxyl group of shikimic acid using ATP as a cosubstrate. The polypeptide is Shikimate kinase 2 (Yersinia pestis bv. Antiqua (strain Antiqua)).